The primary structure comprises 413 residues: Probable N-acetyltransferase HLS1-like (413 aa).

Residues 5–187 form the N-acetyltransferase domain; that stretch reads VEVREYDPSK…VNPVYAHRVN (183 aa).

Belongs to the acetyltransferase family.

This is Probable N-acetyltransferase HLS1-like from Arabidopsis thaliana (Mouse-ear cress).